Consider the following 517-residue polypeptide: Ribonuclease Y (517 aa).

Residues 3 to 23 (AILYVIVAVIALILGGAAGVA) form a helical membrane-spanning segment. One can recognise a KH domain in the interval 207 to 292 (TVTVVSLPND…EMVEKAQKEV (86 aa)). One can recognise an HD domain in the interval 333 to 426 (VLKHSIEVAH…VAAADAISAA (94 aa)).

The protein belongs to the RNase Y family.

It is found in the cell membrane. Its function is as follows. Endoribonuclease that initiates mRNA decay. This is Ribonuclease Y from Symbiobacterium thermophilum (strain DSM 24528 / JCM 14929 / IAM 14863 / T).